The chain runs to 242 residues: Ras-like protein family member 11A (242 aa).

Residues 17–241 (ESSSDYLLPK…SSKAKAASTL (225 aa)) form a small GTPase-like region. GTP-binding positions include 34 to 41 (GASCVGKS), 81 to 85 (DTPGG), and 147 to 150 (NKGD).

The protein belongs to the small GTPase superfamily. Ras family. As to quaternary structure, interacts with UBF/UBTF.

It localises to the nucleus. It is found in the nucleolus. The enzyme catalyses GTP + H2O = GDP + phosphate + H(+). Regulator of rDNA transcription. Acts in cooperation UBF/UBTF and positively regulates RNA polymerase I transcription. The protein is Ras-like protein family member 11A of Rattus norvegicus (Rat).